We begin with the raw amino-acid sequence, 289 residues long: NAD kinase (289 aa).

The active-site Proton acceptor is Asp82. NAD(+)-binding positions include 82-83 (DG), Arg87, 150-151 (NE), Lys161, Arg178, Asp180, 191-196 (TAYAMS), Ala215, and Gln250.

Belongs to the NAD kinase family. A divalent metal cation serves as cofactor.

The protein localises to the cytoplasm. It carries out the reaction NAD(+) + ATP = ADP + NADP(+) + H(+). Functionally, involved in the regulation of the intracellular balance of NAD and NADP, and is a key enzyme in the biosynthesis of NADP. Catalyzes specifically the phosphorylation on 2'-hydroxyl of the adenosine moiety of NAD to yield NADP. This Methanosarcina mazei (strain ATCC BAA-159 / DSM 3647 / Goe1 / Go1 / JCM 11833 / OCM 88) (Methanosarcina frisia) protein is NAD kinase.